An 82-amino-acid polypeptide reads, in one-letter code: Small ribosomal subunit protein bS18 (82 aa).

Residues 1 to 20 (MSETSSAPVRRPFHRRRKTC) are disordered.

The protein belongs to the bacterial ribosomal protein bS18 family. Part of the 30S ribosomal subunit. Forms a tight heterodimer with protein bS6.

In terms of biological role, binds as a heterodimer with protein bS6 to the central domain of the 16S rRNA, where it helps stabilize the platform of the 30S subunit. This is Small ribosomal subunit protein bS18 from Rhizobium johnstonii (strain DSM 114642 / LMG 32736 / 3841) (Rhizobium leguminosarum bv. viciae).